The chain runs to 406 residues: Erythromycin esterase type I (406 aa).

Its function is as follows. This enzyme confers resistance to erythromycin through inactivation by hydrolyzing the lactone ring of the antibiotic. This chain is Erythromycin esterase type I (ereA), found in Escherichia coli.